Reading from the N-terminus, the 31-residue chain is Cytochrome b6-f complex subunit 6 (31 aa).

A helical transmembrane segment spans residues 4–24 (IISYFGFLFGALTLALILFIG).

This sequence belongs to the PetL family. The 4 large subunits of the cytochrome b6-f complex are cytochrome b6, subunit IV (17 kDa polypeptide, PetD), cytochrome f and the Rieske protein, while the 4 small subunits are PetG, PetL, PetM and PetN. The complex functions as a dimer.

It localises to the plastid. Its subcellular location is the chloroplast thylakoid membrane. Component of the cytochrome b6-f complex, which mediates electron transfer between photosystem II (PSII) and photosystem I (PSI), cyclic electron flow around PSI, and state transitions. PetL is important for photoautotrophic growth as well as for electron transfer efficiency and stability of the cytochrome b6-f complex. The polypeptide is Cytochrome b6-f complex subunit 6 (Physcomitrium patens (Spreading-leaved earth moss)).